A 366-amino-acid chain; its full sequence is 2-aminoethylphosphonate--pyruvate transaminase (366 aa).

At Lys194 the chain carries N6-(pyridoxal phosphate)lysine.

It belongs to the class-V pyridoxal-phosphate-dependent aminotransferase family. PhnW subfamily. Homodimer. Requires pyridoxal 5'-phosphate as cofactor.

The catalysed reaction is (2-aminoethyl)phosphonate + pyruvate = phosphonoacetaldehyde + L-alanine. Its function is as follows. Involved in phosphonate degradation. The chain is 2-aminoethylphosphonate--pyruvate transaminase from Lactiplantibacillus plantarum (strain ATCC BAA-793 / NCIMB 8826 / WCFS1) (Lactobacillus plantarum).